Consider the following 192-residue polypeptide: Large ribosomal subunit protein bL25 (192 aa).

This sequence belongs to the bacterial ribosomal protein bL25 family. CTC subfamily. In terms of assembly, part of the 50S ribosomal subunit; part of the 5S rRNA/L5/L18/L25 subcomplex. Contacts the 5S rRNA. Binds to the 5S rRNA independently of L5 and L18.

Functionally, this is one of the proteins that binds to the 5S RNA in the ribosome where it forms part of the central protuberance. The polypeptide is Large ribosomal subunit protein bL25 (Porphyromonas gingivalis (strain ATCC 33277 / DSM 20709 / CIP 103683 / JCM 12257 / NCTC 11834 / 2561)).